The chain runs to 654 residues: Periplasmic beta-glucosidase/beta-xylosidase (654 aa).

Positions 1-25 (MEKSATRQKALLIALPLLFSPLASA) are cleaved as a signal peptide. Active-site residues include D235 and D360.

Belongs to the glycosyl hydrolase 3 family.

The protein localises to the periplasm. It catalyses the reaction Hydrolysis of terminal, non-reducing beta-D-glucosyl residues with release of beta-D-glucose.. The catalysed reaction is Hydrolysis of (1-&gt;4)-beta-D-xylans, to remove successive D-xylose residues from the non-reducing termini.. Functionally, exhibits both beta-glucosidase and beta-xylosidase activities. This chain is Periplasmic beta-glucosidase/beta-xylosidase (bgxA), found in Dickeya chrysanthemi (Pectobacterium chrysanthemi).